The primary structure comprises 119 residues: Holo-[acyl-carrier-protein] synthase (119 aa).

Mg(2+) contacts are provided by Asp7 and Glu56.

Belongs to the P-Pant transferase superfamily. AcpS family. Mg(2+) serves as cofactor.

It is found in the cytoplasm. It carries out the reaction apo-[ACP] + CoA = holo-[ACP] + adenosine 3',5'-bisphosphate + H(+). Functionally, transfers the 4'-phosphopantetheine moiety from coenzyme A to a Ser of acyl-carrier-protein. In Chlamydia trachomatis serovar L2 (strain ATCC VR-902B / DSM 19102 / 434/Bu), this protein is Holo-[acyl-carrier-protein] synthase.